Reading from the N-terminus, the 117-residue chain is Hainantoxin-XV.2 (117 aa).

A signal peptide spans 1–20 (MKLCAVIIASLLVCAAVASS). Residues 18–55 (ASSSDNQKEFAQEKEMTREETQSLGEHEKDDEVTGSEE) are disordered. The propeptide occupies 21-56 (SDNQKEFAQEKEMTREETQSLGEHEKDDEVTGSEER). The span at 23–55 (NQKEFAQEKEMTREETQSLGEHEKDDEVTGSEE) shows a compositional bias: basic and acidic residues. Disulfide bonds link cysteine 58-cysteine 72, cysteine 65-cysteine 78, cysteine 69-cysteine 115, and cysteine 71-cysteine 91.

This sequence belongs to the neurotoxin 03 (Tx2) family. 02 subfamily. HNTX-XV sub-subfamily. Expressed by the venom gland.

It is found in the secreted. Functionally, putative ion channel inhibitor. In Cyriopagopus hainanus (Chinese bird spider), this protein is Hainantoxin-XV.2.